The sequence spans 88 residues: uncharacterized protein (88 aa).

This is an uncharacterized protein from Treponema pallidum (strain Nichols).